A 159-amino-acid polypeptide reads, in one-letter code: SsrA-binding protein (159 aa).

Positions 140 to 150 (RATEKERDWNR) are enriched in basic and acidic residues. The tract at residues 140 to 159 (RATEKERDWNRQKQRVLRQR) is disordered.

The protein belongs to the SmpB family.

It is found in the cytoplasm. Functionally, required for rescue of stalled ribosomes mediated by trans-translation. Binds to transfer-messenger RNA (tmRNA), required for stable association of tmRNA with ribosomes. tmRNA and SmpB together mimic tRNA shape, replacing the anticodon stem-loop with SmpB. tmRNA is encoded by the ssrA gene; the 2 termini fold to resemble tRNA(Ala) and it encodes a 'tag peptide', a short internal open reading frame. During trans-translation Ala-aminoacylated tmRNA acts like a tRNA, entering the A-site of stalled ribosomes, displacing the stalled mRNA. The ribosome then switches to translate the ORF on the tmRNA; the nascent peptide is terminated with the 'tag peptide' encoded by the tmRNA and targeted for degradation. The ribosome is freed to recommence translation, which seems to be the essential function of trans-translation. This chain is SsrA-binding protein, found in Alcanivorax borkumensis (strain ATCC 700651 / DSM 11573 / NCIMB 13689 / SK2).